The following is a 1553-amino-acid chain: DNA topoisomerase 2-alpha (1553 aa).

Residues 1–25 (MELLDSPAPLRPLHDNPRLPKADGA) form a disordered region. A compositionally biased stretch (basic and acidic residues) spans 12–25 (PLHDNPRLPKADGA). Residues Asn-92, Asn-121, 149 to 151 (SSN), and 162 to 169 (GRNGYGAK) contribute to the ATP site. The interaction with DNA stretch occupies residues 343–345 (KKK). Residue 377 to 379 (QTK) participates in ATP binding. The Toprim domain occupies 456 to 573 (CTLILTEGDS…SLLRHNFLEE (118 aa)). Residues Glu-462, Asp-542, and Asp-544 each contribute to the Mg(2+) site. Residues 716 to 1163 (IPSLVDGLKP…SPSDLWKEDL (448 aa)) form the Topo IIA-type catalytic domain. Tyr-806 acts as the O-(5'-phospho-DNA)-tyrosine intermediate in catalysis. Positions 991–1000 (KLQTNLTCNS) are interaction with DNA. Disordered regions lie at residues 1095–1114 (QNKEEEEGDESGEESAAATG) and 1186–1553 (TGKP…DDMF). Over residues 1098–1107 (EEEEGDESGE) the composition is skewed to acidic residues. Positions 1242–1262 (SEKNESDEKQEGNSSGDKEPS) are enriched in basic and acidic residues. 2 stretches are compositionally biased toward acidic residues: residues 1300–1310 (SESDSESDDFE) and 1334–1349 (SDADLTSSDEDSEYQE). Over residues 1371–1385 (VPKEKKGKAPKEKPL) the composition is skewed to basic and acidic residues. The segment covering 1413–1432 (PRAQAVPKKPAAAKKGSTAK) has biased composition (low complexity). Positions 1444–1454 (KKKAAPKAPRR) are enriched in basic residues. Residues 1517–1532 (SIDLTADSPAAAAPRT) are compositionally biased toward low complexity.

This sequence belongs to the type II topoisomerase family. In terms of assembly, homodimer. Requires Mg(2+) as cofactor. The cofactor is Mn(2+). Ca(2+) is required as a cofactor.

Its subcellular location is the cytoplasm. The protein resides in the nucleus. It is found in the nucleoplasm. It localises to the nucleolus. It catalyses the reaction ATP-dependent breakage, passage and rejoining of double-stranded DNA.. Its function is as follows. Key decatenating enzyme that alters DNA topology by binding to two double-stranded DNA molecules, generating a double-stranded break in one of the strands, passing the intact strand through the broken strand, and religating the broken strand. May play a role in the regulation of circadian rhythm. The sequence is that of DNA topoisomerase 2-alpha (TOP2A) from Gallus gallus (Chicken).